Reading from the N-terminus, the 434-residue chain is Probable carboxypeptidase BDBG_01803 (434 aa).

The N-terminal stretch at 1 to 20 is a signal peptide; it reads MKLSHLAAALSAQLVAPVAA. 3 N-linked (GlcNAc...) asparagine glycosylation sites follow: Asn-35, Asn-136, and Asn-150. Asp-160 is a Zn(2+) binding site. Glu-192 acts as the Proton acceptor in catalysis. Residue Glu-193 participates in Zn(2+) binding. The N-linked (GlcNAc...) asparagine glycan is linked to Asn-343.

The protein belongs to the peptidase M20A family. Zn(2+) is required as a cofactor.

The protein localises to the secreted. The chain is Probable carboxypeptidase BDBG_01803 from Blastomyces gilchristii (strain SLH14081) (Blastomyces dermatitidis).